We begin with the raw amino-acid sequence, 336 residues long: 4-aminobenzoate N-oxygenase (336 aa).

Tyrosine 93 serves as a coordination point for 4-nitrobenzoate. Positions 101, 136, 139, and 196 each coordinate Fe cation. Asparagine 200 contributes to the 4-nitrobenzoate binding site. Histidine 223, glutamate 227, and histidine 230 together coordinate Fe cation.

This sequence belongs to the AurF N-oxygenase family. As to quaternary structure, homodimer. Fe(2+) is required as a cofactor.

The catalysed reaction is 4-aminobenzoate + AH2 + 2 O2 = 4-nitrobenzoate + A + 2 H2O. Its pathway is antibiotic biosynthesis. Its function is as follows. Involved in the biosynthesis of the polyketide antibiotic aureothin. Catalyzes the oxidation of p-aminobenzoate (pABA) to p-nitrobenzoate (pNBA), an unusual polyketide synthase starter unit. Reaction mechanism involves the generation of a peroxodiiron(III/III) intermediate, which effects the initial oxidation of p-aminobenzoate to p-hydroxylaminobenzoate (Ar-NHOH). Ar-NHOH is then probably directly converted to the fully oxidized p-nitrobenzoate via a four-electron N-oxidation, bypassing the formation of a nitroso compound. The polypeptide is 4-aminobenzoate N-oxygenase (Streptomyces thioluteus).